A 103-amino-acid polypeptide reads, in one-letter code: Large ribosomal subunit protein bL21 (103 aa).

Belongs to the bacterial ribosomal protein bL21 family. As to quaternary structure, part of the 50S ribosomal subunit. Contacts protein L20.

In terms of biological role, this protein binds to 23S rRNA in the presence of protein L20. The polypeptide is Large ribosomal subunit protein bL21 (Mycobacterium tuberculosis (strain ATCC 25618 / H37Rv)).